The sequence spans 26 residues: uncharacterized protein (26 aa).

The helical transmembrane segment at 3–23 (IIYLILFLIVIYLLYRILDVL) threads the bilayer.

The protein resides in the membrane. This is an uncharacterized protein from Helicobacter pylori (strain J99 / ATCC 700824) (Campylobacter pylori J99).